Here is a 275-residue protein sequence, read N- to C-terminus: uncharacterized protein (275 aa).

The protein resides in the virion. This is an uncharacterized protein from Acanthamoeba polyphaga (Amoeba).